The sequence spans 296 residues: Ribosomal RNA small subunit methyltransferase A (296 aa).

Asn32, Leu34, Gly59, Glu80, Asp105, and Asn130 together coordinate S-adenosyl-L-methionine.

It belongs to the class I-like SAM-binding methyltransferase superfamily. rRNA adenine N(6)-methyltransferase family. RsmA subfamily.

The protein localises to the cytoplasm. The enzyme catalyses adenosine(1518)/adenosine(1519) in 16S rRNA + 4 S-adenosyl-L-methionine = N(6)-dimethyladenosine(1518)/N(6)-dimethyladenosine(1519) in 16S rRNA + 4 S-adenosyl-L-homocysteine + 4 H(+). Specifically dimethylates two adjacent adenosines (A1518 and A1519) in the loop of a conserved hairpin near the 3'-end of 16S rRNA in the 30S particle. May play a critical role in biogenesis of 30S subunits. The sequence is that of Ribosomal RNA small subunit methyltransferase A from Levilactobacillus brevis (strain ATCC 367 / BCRC 12310 / CIP 105137 / JCM 1170 / LMG 11437 / NCIMB 947 / NCTC 947) (Lactobacillus brevis).